The sequence spans 178 residues: Cytochrome b6-f complex iron-sulfur subunit (178 aa).

The chain crosses the membrane as a helical span at residues 20 to 42 (LLTFGTATGVALGALYPVANYFM). Residues 65–161 (KTGWLATHQA…VDIEDDAVLV (97 aa)) form the Rieske domain. Cys-107, His-109, Cys-125, and His-128 together coordinate [2Fe-2S] cluster. A disulfide bridge connects residues Cys-112 and Cys-127.

It belongs to the Rieske iron-sulfur protein family. In terms of assembly, the 4 large subunits of the cytochrome b6-f complex are cytochrome b6, subunit IV (17 kDa polypeptide, PetD), cytochrome f and the Rieske protein, while the 4 small subunits are PetG, PetL, PetM and PetN. The complex functions as a dimer. It depends on [2Fe-2S] cluster as a cofactor.

Its subcellular location is the cellular thylakoid membrane. The enzyme catalyses 2 oxidized [plastocyanin] + a plastoquinol + 2 H(+)(in) = 2 reduced [plastocyanin] + a plastoquinone + 4 H(+)(out). In terms of biological role, component of the cytochrome b6-f complex, which mediates electron transfer between photosystem II (PSII) and photosystem I (PSI), cyclic electron flow around PSI, and state transitions. The polypeptide is Cytochrome b6-f complex iron-sulfur subunit (Prochlorococcus marinus (strain MIT 9301)).